A 257-amino-acid polypeptide reads, in one-letter code: MLILISPAKTLDYQSPLATTRYTQPELLDHSQQLIQQARQLSAPQISRLMGISDKLADLNATRFHDWQPHFTPDNARQAILAFKGDVYTGLQAETFNDADFDFAQQHLRMLSGLYGVLRPLDLMQPYRLEMGIRLENPRGKDLYQFWGDIITDKLNEALEAQGDRVVVNLASEEYFKSVKPKKLDAELIKPVFLDEKNGKFKVVSFYAKKARGLMSRFIIENRLTKPEQLTAFDREGYFFDEETSTQDELVFKRYEQ.

The protein belongs to the UPF0246 family.

The polypeptide is UPF0246 protein YaaA (Salmonella typhi).